A 1322-amino-acid chain; its full sequence is FERM and PDZ domain-containing protein 4 (1322 aa).

Residues 33–66 (QVPPYGWEMTANRDGRDYFINHMTQAIPFDDPRL) enclose the WW domain. The PDZ domain occupies 78–155 (KVEMRRDPVL…SILLTVIQPY (78 aa)). The region spanning 204-519 (NVLKVYLENG…GYYRLLVDSR (316 aa)) is the FERM domain. Disordered stretches follow at residues 809–847 (APPP…EIPV), 900–927 (SPES…TAQK), 952–983 (EFPA…PPKV), 1027–1080 (RKSK…STFN), 1105–1148 (SGLE…GQGD), 1160–1180 (AKDL…PSKL), and 1207–1227 (HFSL…TGSS). Low complexity predominate over residues 902 to 921 (ESSSDSGNETNSSEMTESSE). The span at 1041 to 1054 (NGNTTGKKQQGTKT) shows a compositional bias: low complexity. Positions 1067–1080 (TVSSRDSQHLSTFN) are enriched in polar residues. A compositionally biased stretch (polar residues) spans 1207–1217 (HFSLQSSQGSS).

In terms of assembly, interacts (via C-terminus) with DLG1, DLG2, DLG3 and DLG4/PSD95. Interacts (via N-terminus) with ARHGEF7; the interaction is mediated by the PDZ domain. Interacts with GPSM2 (via TPR repeat region).

It localises to the cell projection. It is found in the dendritic spine. Its function is as follows. Positive regulator of dendritic spine morphogenesis and density. Required for the maintenance of excitatory synaptic transmission. Binds phosphatidylinositol 4,5-bisphosphate. The polypeptide is FERM and PDZ domain-containing protein 4 (FRMPD4) (Homo sapiens (Human)).